The sequence spans 676 residues: Multisubstrate pseudouridine synthase 7 (676 aa).

Disordered stretches follow at residues 1-27 (MSDSSEATVKRPLDAHVGPSENAAKKL) and 87-110 (KMPKKPQRSKEEVNAEKESEAARR). Serine 2 is modified (N-acetylserine). The segment covering 94-110 (RSKEEVNAEKESEAARR) has biased composition (basic and acidic residues). Aspartate 256 (nucleophile) is an active-site residue. One can recognise a TRUD domain in the interval 338-582 (GFINYFGMQR…AGSYRTVIQK (245 aa)).

It belongs to the pseudouridine synthase TruD family.

It localises to the nucleus. The protein resides in the cytoplasm. The catalysed reaction is uridine in 5S rRNA = pseudouridine in 5S rRNA. The enzyme catalyses uridine in snRNA = pseudouridine in snRNA. It carries out the reaction uridine(13) in tRNA = pseudouridine(13) in tRNA. It catalyses the reaction a uridine in mRNA = a pseudouridine in mRNA. Functionally, catalyzes pseudouridylation at position 35 in U2 snRNA stem-loop II region which induces particular conformation of the mRNA-U2 snRNA duplex and places the nucleophile in an accessible position for the first step of splicing. Also catalyzes pseudouridylation at position 56 in U2 snRNA. Also catalyzes pseudouridylation at position 50 in 5S rRNA, position 13 in cytoplasmic tRNAs, and position 35 in pre-tRNA(Tyr). Pseudouridine residues in tRNAs may stabilize the local RNA conformation, favor interactions with protein partners and play an important role in the stabilization of the codon-anticodon interaction with mRNA. Also catalyzes pseudouridylation of mRNAs in response to heat shock: mediates pseudouridylation of mRNAs with the consensus sequence 5'-UGUAR-3'. In Saccharomyces cerevisiae (strain ATCC 204508 / S288c) (Baker's yeast), this protein is Multisubstrate pseudouridine synthase 7.